Here is a 328-residue protein sequence, read N- to C-terminus: Homoarginine-6-hydroxylase 2-ODD-233 (328 aa).

The Fe2OG dioxygenase domain maps to 183–288; it reads FWVCRLIGYP…VSVAFFYESN (106 aa). 3 residues coordinate Fe cation: His210, Asp212, and His268. Arg278 is a binding site for 2-oxoglutarate.

The protein belongs to the iron/ascorbate-dependent oxidoreductase family. Fe(2+) serves as cofactor. The cofactor is L-ascorbate. Expressed in roots and shoots.

The protein localises to the cytoplasm. It carries out the reaction L-homoarginine + 2-oxoglutarate + O2 = 6-hydroxy-L-homoarginine + succinate + CO2. It catalyses the reaction melatonin + 2-oxoglutarate + O2 = 2-hydroxymelatonin + succinate + CO2. Its function is as follows. 2-oxoglutarate-dependent dioxygenase catalyzing homoarginine 6-hydroxylation thus producing 6-hydroxy-L-homoarginine. Guanidine (Gd) is in turn synthesized by the spontaneous conversion of 6-hydroxy-L-homoarginine to (S)-2-amino-6-oxohexanoate (RHEA:79843); guanidine is a nitrogen-rich compound that can serve as a defense or signaling substance. Involved in melatonin degradation. Catalyzes the hydroxylation of melatonin to produce 2-hydroxymelatonin. In Oryza sativa subsp. japonica (Rice), this protein is Homoarginine-6-hydroxylase 2-ODD-233.